Reading from the N-terminus, the 155-residue chain is DNA gyrase inhibitor (155 aa).

The protein belongs to the DNA gyrase inhibitor family. As to quaternary structure, interacts with DNA gyrase.

The protein resides in the cytoplasm. Inhibits the supercoiling activity of DNA gyrase. Acts by inhibiting DNA gyrase at an early step, prior to (or at the step of) binding of DNA by the gyrase. It protects cells against toxins that target DNA gyrase, by inhibiting activity of these toxins and reducing the formation of lethal double-strand breaks in the cell. This is DNA gyrase inhibitor from Citrobacter koseri (strain ATCC BAA-895 / CDC 4225-83 / SGSC4696).